Here is a 293-residue protein sequence, read N- to C-terminus: 4-hydroxy-tetrahydrodipicolinate synthase (293 aa).

Residue Thr45 participates in pyruvate binding. Tyr133 acts as the Proton donor/acceptor in catalysis. Lys161 serves as the catalytic Schiff-base intermediate with substrate. Ile203 serves as a coordination point for pyruvate.

The protein belongs to the DapA family. Homotetramer; dimer of dimers.

The protein resides in the cytoplasm. It carries out the reaction L-aspartate 4-semialdehyde + pyruvate = (2S,4S)-4-hydroxy-2,3,4,5-tetrahydrodipicolinate + H2O + H(+). The protein operates within amino-acid biosynthesis; L-lysine biosynthesis via DAP pathway; (S)-tetrahydrodipicolinate from L-aspartate: step 3/4. Its function is as follows. Catalyzes the condensation of (S)-aspartate-beta-semialdehyde [(S)-ASA] and pyruvate to 4-hydroxy-tetrahydrodipicolinate (HTPA). The protein is 4-hydroxy-tetrahydrodipicolinate synthase of Aliivibrio fischeri (strain MJ11) (Vibrio fischeri).